We begin with the raw amino-acid sequence, 132 residues long: MRAFLEEFKKFISRGNALDLAVGVVIGGAFGKIVTSFVADLFTPVLGLMIGGVSFQNLVWKIGGSPEDPVTINYGSFLQAVFDFVIIAFAIFLLVKAINTLQRKEEESPPTLPPPEVVLLTEIRDILNRHSQ.

2 helical membrane-spanning segments follow: residues 11–31 and 75–95; these read FISRGNALDLAVGVVIGGAFG and GSFLQAVFDFVIIAFAIFLLV.

The protein belongs to the MscL family. In terms of assembly, homopentamer.

It is found in the cell inner membrane. Channel that opens in response to stretch forces in the membrane lipid bilayer. May participate in the regulation of osmotic pressure changes within the cell. In Synechococcus sp. (strain JA-3-3Ab) (Cyanobacteria bacterium Yellowstone A-Prime), this protein is Large-conductance mechanosensitive channel.